The following is a 755-amino-acid chain: Dolichyl-phosphate-mannose--protein mannosyltransferase 4 (755 aa).

The interval 1–23 (MSQTLKKRGGNSSGRKSPTTSNI) is disordered. A glycan (N-linked (GlcNAc...) asparagine) is linked at Asn11. Over residues 13-23 (SGRKSPTTSNI) the composition is skewed to polar residues. 6 helical membrane-spanning segments follow: residues 92 to 112 (FFDL…WLIG), 147 to 167 (IVPI…ACLF), 185 to 205 (ILLD…YSKF), 212 to 232 (SFSS…SCVI), 237 to 257 (VGVF…WILL), and 278 to 298 (ALII…FAIL). MIR domains follow at residues 325–389 (SKPV…IVPT), 396–454 (GTKV…LRLH), and 466–523 (KKEI…FDLI). Asn445 carries N-linked (GlcNAc...) asparagine glycosylation. 3 helical membrane passes run 595–615 (IFFI…SIYI), 640–660 (LYNT…PFFL), and 670–690 (YLPA…FICS). Residue Asn691 is glycosylated (N-linked (GlcNAc...) asparagine). The helical transmembrane segment at 706 to 726 (YKIIAVVAACSTAIIWFFFYF) threads the bilayer.

This sequence belongs to the glycosyltransferase 39 family. In terms of assembly, forms a functional homodimer.

It localises to the endoplasmic reticulum membrane. The catalysed reaction is a di-trans,poly-cis-dolichyl beta-D-mannosyl phosphate + L-seryl-[protein] = 3-O-(alpha-D-mannosyl)-L-seryl-[protein] + a di-trans,poly-cis-dolichyl phosphate + H(+). It catalyses the reaction a di-trans,poly-cis-dolichyl beta-D-mannosyl phosphate + L-threonyl-[protein] = 3-O-(alpha-D-mannosyl)-L-threonyl-[protein] + a di-trans,poly-cis-dolichyl phosphate + H(+). It functions in the pathway protein modification; protein glycosylation. Functionally, protein mannosyltransferase (PMT) involved in hyphal growth and drug sensitivity. Transfers mannose from Dol-P-mannose to Ser or Thr residues on proteins. PMT1, PMT2 and PMT4 account for most of the protein-O-glycosylation activity, while PMT5 and PMT6 may specifically modulate a much narrower spectrum of target proteins. Accounts for the O-glycosylation of AXL2, responsible for bud site selection, as well as of the SEC20 t-SNARE component. O-glycosylation of SEC20 is essential for its stability. Required for biofilm formation. The protein is Dolichyl-phosphate-mannose--protein mannosyltransferase 4 of Candida albicans (strain SC5314 / ATCC MYA-2876) (Yeast).